Reading from the N-terminus, the 149-residue chain is Tetracenomycin polyketide synthase protein TcmJ (149 aa).

In terms of domain architecture, Cupin type-2 spans 51–117 (HIELAPGESV…NRGNVPARVV (67 aa)). Residues 127-149 (PELGHVDTEPVPNPAAAPPKVGG) are disordered.

The tetracenomycin polyketide synthase (TCM PKS) is composed of a ketosynthase complex (TcmKL), an acyl carrier protein (TcmM), a cyclase (TcmN) and a probable second cyclase (TcmJ).

The catalysed reaction is 10 malonyl-CoA + 8 H(+) = tetracenomycin F2 + 10 CO2 + 10 CoA + 2 H2O. It participates in antibiotic biosynthesis; tetracenomycin C biosynthesis. In terms of biological role, involved in the biosynthesis of tetracenomycin C (TCM C). Part of a type II polyketide synthase (PKS) that catalyzes the synthesis of tetracenomycin F2 (TCM F2), a precursor of TCM C, from malonyl-CoA. TcmJ, while not absolutely required, greatly increases the tetracenomycin F2 production. It probably acts as a cyclase. In Streptomyces glaucescens, this protein is Tetracenomycin polyketide synthase protein TcmJ.